Here is a 365-residue protein sequence, read N- to C-terminus: GTPase Obg (365 aa).

In terms of domain architecture, Obg spans 1 to 177 (MFTDYVRILA…GQFLLELKTI (177 aa)). A disordered region spans residues 64–85 (QFAEDGQPGKGQKRKGRDGKNL). Positions 178-348 (ADVGFVGLPN…FLNSCRKSFE (171 aa)) constitute an OBG-type G domain. Residues 184 to 191 (GLPNSGKS), 209 to 213 (FTTLK), 231 to 234 (DIPG), 300 to 303 (NKVD), and 329 to 331 (SAL) each bind GTP. Mg(2+) contacts are provided by Ser-191 and Thr-211.

This sequence belongs to the TRAFAC class OBG-HflX-like GTPase superfamily. OBG GTPase family. In terms of assembly, monomer. It depends on Mg(2+) as a cofactor.

The protein localises to the cytoplasm. Functionally, an essential GTPase which binds GTP, GDP and possibly (p)ppGpp with moderate affinity, with high nucleotide exchange rates and a fairly low GTP hydrolysis rate. Plays a role in control of the cell cycle, stress response, ribosome biogenesis and in those bacteria that undergo differentiation, in morphogenesis control. The polypeptide is GTPase Obg (Methylacidiphilum infernorum (isolate V4) (Methylokorus infernorum (strain V4))).